The sequence spans 266 residues: Integral membrane protein 2B (266 aa).

At 1–54 (MVKVTFNSALAQKEAKKDEPKSSEEALIVPPDAVAVDCKDPGDVVPVGQRRAWC) the chain is on the cytoplasmic side. Residues 55 to 75 (WCMCFGLAFMLAGVILGGAYL) traverse the membrane as a helical; Signal-anchor for type II membrane protein segment. The Lumenal segment spans residues 76-266 (YKYFALQPDD…KFAVETLICS (191 aa)). Positions 102–134 (EPSADAPAARYQTIEENIKIFEEDAVEFISVPV) are necessary for interaction with APP and inhibitor effects on APP processing. Residues 137-231 (FADSDPANIV…LCHDKETYKL (95 aa)) enclose the BRICHOS domain. 2 disulfide bridges follow: C164–C223 and C248–C265. A glycan (N-linked (GlcNAc...) asparagine) is linked at N170.

It belongs to the ITM2 family. Homodimer; disulfide-linked. Interacts with SPPL2A and SPPL2B. Interacts with APP. Mature BRI2 (mBRI2) interacts with the APP amyloid-beta A4 protein; the interaction occurs at the cell surface and in the endocytic compartments and enable alpha- and beta-secretase-induced APP cleavage inhibition. Mature BRI2 (mBRI2) interacts with the APP C99; the interaction occurs in the endocytic compartments and enable gamma-secretase-induced C99 cleavage inhibition. May form heterodimers with Bri23 peptide and APP amyloid-beta protein 40. Interacts with ADAM7 in sperm; the interaction increases following capacitation. Post-translationally, the ectodomain C-terminal part of the imBRI2 is processed by furin producing a secreted Bri23 peptide and a mature BRI2, membrane form (mBRI2). The remaining part of the ectodomain of mBRI2 containing the BRICHOS domain is cleaved by ADAM10 and is secreted (BRI2C, soluble form). The membrane-bound N-terminal fragment (BRI2C, membrane form) is further proteolytically processed by SPPL2A and SPPL2B through regulated intramembrane proteolysis producing a secreted C-peptide and a BRI2 intracellular domain (BRI2 ICD) released in the cytosol. Shedding by ADAM10 facilitates intramembrane cleavage but is not absolutely required for BRI2 ICD generation. In terms of processing, glycosylation at Asn-170 is important for cell surface localization, but doesn't affect furin- and ADAM10-induced proteolytic processing. As to expression, expressed in the brain, testis, testicular sperm, epididymis and mature epididymal sperm (at protein level).

The protein localises to the golgi apparatus membrane. Its subcellular location is the cell membrane. It localises to the endosome membrane. It is found in the secreted. Functionally, plays a regulatory role in the processing of the amyloid-beta A4 precursor protein (APP) and acts as an inhibitor of the amyloid-beta peptide aggregation and fibrils deposition. Plays a role in the induction of neurite outgrowth. Functions as a protease inhibitor by blocking access of secretases to APP cleavage sites. Its function is as follows. Mature BRI2 (mBRI2) functions as a modulator of the amyloid-beta A4 precursor protein (APP) processing leading to a strong reduction in the secretion of secretase-processed amyloid-beta protein 40 and amyloid-beta protein 42. Bri23 peptide prevents aggregation of APP amyloid-beta protein 42 into toxic oligomers. The sequence is that of Integral membrane protein 2B (Itm2b) from Mus musculus (Mouse).